A 122-amino-acid polypeptide reads, in one-letter code: Large ribosomal subunit protein uL18 (122 aa).

The disordered stretch occupies residues 1–27; the sequence is MSNLSRKQQTQKRHRRLRRHLNGTAQR. The segment covering 9-21 has biased composition (basic residues); sequence QTQKRHRRLRRHL.

Belongs to the universal ribosomal protein uL18 family. Part of the 50S ribosomal subunit; part of the 5S rRNA/L5/L18/L25 subcomplex. Contacts the 5S and 23S rRNAs.

In terms of biological role, this is one of the proteins that bind and probably mediate the attachment of the 5S RNA into the large ribosomal subunit, where it forms part of the central protuberance. The polypeptide is Large ribosomal subunit protein uL18 (Prochlorococcus marinus (strain MIT 9303)).